Here is a 415-residue protein sequence, read N- to C-terminus: Serine hydroxymethyltransferase (415 aa).

(6S)-5,6,7,8-tetrahydrofolate contacts are provided by residues Leu117 and 121–123 (GHL). Lys226 is subject to N6-(pyridoxal phosphate)lysine.

It belongs to the SHMT family. In terms of assembly, homodimer. Pyridoxal 5'-phosphate serves as cofactor.

It is found in the cytoplasm. The enzyme catalyses (6R)-5,10-methylene-5,6,7,8-tetrahydrofolate + glycine + H2O = (6S)-5,6,7,8-tetrahydrofolate + L-serine. It participates in one-carbon metabolism; tetrahydrofolate interconversion. Its pathway is amino-acid biosynthesis; glycine biosynthesis; glycine from L-serine: step 1/1. Its function is as follows. Catalyzes the reversible interconversion of serine and glycine with tetrahydrofolate (THF) serving as the one-carbon carrier. This reaction serves as the major source of one-carbon groups required for the biosynthesis of purines, thymidylate, methionine, and other important biomolecules. Also exhibits THF-independent aldolase activity toward beta-hydroxyamino acids, producing glycine and aldehydes, via a retro-aldol mechanism. This Dehalococcoides mccartyi (strain CBDB1) protein is Serine hydroxymethyltransferase.